The chain runs to 404 residues: MKLPIYLDYAATTPVDPRVAEKMFQYMTMDGIFGNPASRSHRYGWQAEEAVDVARSQVADLINADHREIVFTSGATESNNLAIKGVAHFYNKKGKHIITSKTEHKAVLDTCRQLEREGFEVTYLEPEANGIIPMERLEAAMRDDTILVSIMHVNNEIGVIHDVDAIGELCRSKGIIFHMDAAQSAGKLPIDVQTTKVDLISISGHKMYGPKGIGALYVRRKPRIRLEAQMHGGGHERGMRSGTLATHQIVGLGEAAAIAKAEMATDNARIAKLRDKLWNGIKHIEETYVNGDMTHRVSGSLNVSFNYVEGESLMMALKDLAVSSGSACTSASLEPSYVLRALGLNDEMAHSSIRFSIGRFTTEEEIDHAIETITQSIDKLREMSPLWEMFKDGIDLNQVQWAHH.

Pyridoxal 5'-phosphate is bound by residues 75–76 (AT), N155, Q183, and 203–205 (SGH). K206 carries the N6-(pyridoxal phosphate)lysine modification. T243 is a binding site for pyridoxal 5'-phosphate. C328 acts as the Cysteine persulfide intermediate in catalysis. C328 is a binding site for [2Fe-2S] cluster.

Belongs to the class-V pyridoxal-phosphate-dependent aminotransferase family. NifS/IscS subfamily. In terms of assembly, homodimer. Forms a heterotetramer with IscU, interacts with other sulfur acceptors. The cofactor is pyridoxal 5'-phosphate.

The protein localises to the cytoplasm. The catalysed reaction is (sulfur carrier)-H + L-cysteine = (sulfur carrier)-SH + L-alanine. It functions in the pathway cofactor biosynthesis; iron-sulfur cluster biosynthesis. Master enzyme that delivers sulfur to a number of partners involved in Fe-S cluster assembly, tRNA modification or cofactor biosynthesis. Catalyzes the removal of elemental sulfur atoms from cysteine to produce alanine. Functions as a sulfur delivery protein for Fe-S cluster synthesis onto IscU, an Fe-S scaffold assembly protein, as well as other S acceptor proteins. The protein is Cysteine desulfurase IscS of Shewanella sp. (strain ANA-3).